Here is a 256-residue protein sequence, read N- to C-terminus: uncharacterized protein (256 aa).

Positions 1-22 (MGYLKRFALYISVMILIFAIAG) are cleaved as a signal peptide. Cys23 carries N-palmitoyl cysteine lipidation. The S-diacylglycerol cysteine moiety is linked to residue Cys23.

This sequence belongs to the staphylococcal tandem lipoprotein family.

The protein localises to the cell membrane. This is an uncharacterized protein from Staphylococcus aureus (strain COL).